Reading from the N-terminus, the 89-residue chain is Small ribosomal subunit protein uS15 (89 aa).

Belongs to the universal ribosomal protein uS15 family. As to quaternary structure, part of the 30S ribosomal subunit. Forms a bridge to the 50S subunit in the 70S ribosome, contacting the 23S rRNA.

In terms of biological role, one of the primary rRNA binding proteins, it binds directly to 16S rRNA where it helps nucleate assembly of the platform of the 30S subunit by binding and bridging several RNA helices of the 16S rRNA. Its function is as follows. Forms an intersubunit bridge (bridge B4) with the 23S rRNA of the 50S subunit in the ribosome. In Laribacter hongkongensis (strain HLHK9), this protein is Small ribosomal subunit protein uS15.